The following is a 317-amino-acid chain: DNA repair nuclease/redox regulator APEX1 (317 aa).

The segment at 1–58 is disordered; the sequence is MPKRGKKAAADDGEEPKSEPETKKSKGAAKKTEKEAAGEGPVLYEDPPDQKTSPSGKS. Positions 2–32 are necessary for interaction with YBX1, binding to RNA, association together with NPM1 to rRNA, endoribonuclease activity on abasic RNA and localization in the nucleoli; it reads PKRGKKAAADDGEEPKSEPETKKSKGAAKKT. N6-acetyllysine; by EP300 is present on residues K6 and K7. The short motif at 8 to 12 is the Nuclear localization signal (NLS) element; the sequence is AAADD. Basic and acidic residues predominate over residues 15-37; sequence EPKSEPETKKSKGAAKKTEKEAA. A Phosphoserine modification is found at S18. The tract at residues 22 to 32 is necessary for interaction with NPM1 and for efficient rRNA binding; it reads TKKSKGAAKKT. N6-acetyllysine occurs at positions 26, 30, 31, and 34. S53 carries the phosphoserine modification. The Nuclear export signal (NES) motif lies at 63–79; it reads ICSWNVDGLRAWIKKKG. At C64 the chain carries S-nitrosocysteine; alternate. A disulfide bridge connects residues C64 and C92. D69 provides a ligand contact to Mg(2+). C92 carries the post-translational modification S-nitrosocysteine; alternate. A Mg(2+)-binding site is contributed by E95. Y170 is a catalytic residue. The residue at position 196 (K196) is an N6-acetyllysine. Mg(2+)-binding residues include D209 and N211. The active-site Proton donor/acceptor is D209. T232 carries the post-translational modification Phosphothreonine; by CDK5. The tract at residues 288–317 is mitochondrial targeting sequence (MTS); it reads HSLLPALCDSKIRSKALGSDHCPITLYLAL. A Mg(2+)-binding site is contributed by D307. C309 bears the S-nitrosocysteine mark.

This sequence belongs to the DNA repair enzymes AP/ExoA family. In terms of assembly, monomer. Homodimer; disulfide-linked. Component of the SET complex, composed of at least APEX1, SET, ANP32A, HMGB2, NME1 and TREX1. Associates with the dimer XRCC5/XRCC6 in a DNA-dependent manner. Interacts with SIRT1; the interaction is increased in the context of genotoxic stress. Interacts with HDAC1, HDAC2 and HDAC3; the interactions are not dependent on the APEX1 acetylation status. Interacts with XRCC1; the interaction is induced by SIRT1 and increased with the APEX1 acetylated form. Interacts with NPM1 (via N-terminal domain); the interaction is RNA-dependent and decreases in hydrogen peroxide-damaged cells. Interacts (via N-terminus) with YBX1 (via C-terminus); the interaction is increased in presence of APEX1 acetylated at Lys-6 and Lys-7. Interacts with HNRNPL; the interaction is DNA-dependent. Interacts (via N-terminus) with KPNA1 and KPNA2. Interacts with TXN; the interaction stimulates the FOS/JUN AP-1 complex DNA-binding activity in a redox-dependent manner. Interacts with GZMA, KRT8, MDM2, POLB, PRDX6, PRPF19, RPLP0, TOMM20 and WDR77. Binds to CDK5. The cofactor is Mg(2+). Mn(2+) is required as a cofactor. Post-translationally, phosphorylated. Phosphorylation by kinase PKC or casein kinase CK2 results in enhanced redox activity that stimulates binding of the FOS/JUN AP-1 complex to its cognate binding site. AP-endodeoxyribonuclease activity is not affected by CK2-mediated phosphorylation. Phosphorylation of Thr-232 by CDK5 in response to MPP(+)/MPTP (1-methyl-4-phenylpyridinium) reduces AP-endodeoxyribonuclease activity resulting in accumulation of DNA damage and contributing to neuronal death. Acetylated on Lys-6 and Lys-7. Acetylation is increased by the transcriptional coactivator EP300 acetyltransferase, genotoxic agents like H(2)O(2) and methyl methanesulfonate (MMS). Acetylation increases its binding affinity to the negative calcium response element (nCaRE) DNA promoter. The acetylated form induces a stronger binding of YBX1 to the Y-box sequence in the MDR1 promoter than the unacetylated form. Deacetylated on lysines. Lys-6 and Lys-7 are deacetylated by SIRT1. In terms of processing, cleaved at Lys-30 by granzyme A to create the mitochondrial form; leading in reduction of binding to DNA, AP endodeoxyribonuclease activity, redox activation of transcription factors and to enhanced cell death. Cleaved by granzyme K; leading to intracellular ROS accumulation and enhanced cell death after oxidative stress. Post-translationally, cys-64 and Cys-92 are nitrosylated in response to nitric oxide (NO) and lead to the exposure of the nuclear export signal (NES). Ubiquitinated by MDM2; leading to translocation to the cytoplasm and proteasomal degradation. In terms of tissue distribution, expressed in both resting and stimulated B cells stimulated to switch (at protein level).

Its subcellular location is the nucleus. The protein resides in the nucleolus. It localises to the nucleus speckle. It is found in the endoplasmic reticulum. The protein localises to the cytoplasm. Its subcellular location is the mitochondrion. It carries out the reaction a deoxyribonucleotide-2'-deoxyribose-5'-monophosphate-DNA + H2O = a 5'-end 2'-deoxyribose-5'-monophosphate-DNA + a 3'-end 2'-deoxyribonucleotide-DNA + H(+). It catalyses the reaction Exonucleolytic cleavage in the 3'- to 5'-direction to yield nucleoside 5'-phosphates.. The enzyme catalyses a 3'-end 2'-deoxyribonucleotide-3'-phosphoglycolate-DNA + H2O = 2-phosphoglycolate + a 3'-end 2'-deoxyribonucleotide-DNA + H(+). The catalysed reaction is a 3'-end 2'-deoxyribonucleotide-8-oxoguanine-DNA + H2O = 8-oxo-dGMP + a 3'-end 2'-deoxyribonucleotide-DNA + H(+). Its activity is regulated as follows. NPM1 stimulates endodeoxyribonuclease activity on double-stranded DNA with AP sites, but inhibits endoribonuclease activity on single-stranded RNA containing AP sites. Functionally, multifunctional protein that plays a central role in the cellular response to oxidative stress. The two major activities of APEX1 are DNA repair and redox regulation of transcriptional factors. Functions as an apurinic/apyrimidinic (AP) endodeoxyribonuclease in the base excision repair (BER) pathway of DNA lesions induced by oxidative and alkylating agents. Initiates repair of AP sites in DNA by catalyzing hydrolytic incision of the phosphodiester backbone immediately adjacent to the damage, generating a single-strand break with 5'-deoxyribose phosphate and 3'-hydroxyl ends. Also incises at AP sites in the DNA strand of DNA/RNA hybrids, single-stranded DNA regions of R-loop structures, and single-stranded RNA molecules. Operates at switch sites of immunoglobulin (Ig) constant regions where it mediates Ig isotype class switch recombination. Processes AP sites induced by successive action of AICDA and UNG. Generates staggered nicks in opposite DNA strands resulting in the formation of double-strand DNA breaks that are finally resolved via non-homologous end joining repair pathway. Has 3'-5' exodeoxyribonuclease activity on mismatched deoxyribonucleotides at the 3' termini of nicked or gapped DNA molecules during short-patch BER. Possesses DNA 3' phosphodiesterase activity capable of removing lesions (such as phosphoglycolate and 8-oxoguanine) blocking the 3' side of DNA strand breaks. Also acts as an endoribonuclease involved in the control of single-stranded RNA metabolism. Plays a role in regulating MYC mRNA turnover by preferentially cleaving in between UA and CA dinucleotides of the MYC coding region determinant (CRD). In association with NMD1, plays a role in the rRNA quality control process during cell cycle progression. Acts as a loading factor for POLB onto non-incised AP sites in DNA and stimulates the 5'-terminal deoxyribose 5'-phosphate (dRp) excision activity of POLB. Exerts reversible nuclear redox activity to regulate DNA binding affinity and transcriptional activity of transcriptional factors by controlling the redox status of their DNA-binding domain, such as the FOS/JUN AP-1 complex after exposure to IR. Involved in calcium-dependent down-regulation of parathyroid hormone (PTH) expression by binding to negative calcium response elements (nCaREs). Together with HNRNPL or the dimer XRCC5/XRCC6, associates with nCaRE, acting as an activator of transcriptional repression. May also play a role in the epigenetic regulation of gene expression by participating in DNA demethylation. Stimulates the YBX1-mediated MDR1 promoter activity, when acetylated at Lys-6 and Lys-7, leading to drug resistance. Plays a role in protection from granzyme-mediated cellular repair leading to cell death. Binds DNA and RNA. Associates, together with YBX1, on the MDR1 promoter. Together with NPM1, associates with rRNA. This chain is DNA repair nuclease/redox regulator APEX1 (Apex1), found in Mus musculus (Mouse).